A 316-amino-acid polypeptide reads, in one-letter code: Long form salivary protein D7L1 (316 aa).

Residues 1–23 form the signal peptide; the sequence is MSHTRAVVLAVACLCLILVQVEG. 4 disulfide bridges follow: C40-C76, C72-C131, C181-C214, and C255-C266.

Belongs to the PBP/GOBP family.

The protein localises to the secreted. In terms of biological role, modulates blood feeding of female mosquitoes on vertebrate species by binding and sequestering different mediators involved in the host response, such as biogenic amines and eicosanoids. Binds serotonin, tryptamine, histamine, leukotriene C4, leukotriene D4 and leukotriene E4. Does not bind octopamine, dopamine, noradrenaline, adrenaline and prostaglandin PGF2alpha. The chain is Long form salivary protein D7L1 from Anopheles atroparvus (European mosquito).